The primary structure comprises 154 residues: Ribosome maturation factor RimP (154 aa).

Belongs to the RimP family.

Its subcellular location is the cytoplasm. Functionally, required for maturation of 30S ribosomal subunits. This is Ribosome maturation factor RimP from Prochlorococcus marinus (strain MIT 9303).